The following is a 1192-amino-acid chain: Leucine-rich repeat receptor protein kinase EMS1 (1192 aa).

A signal peptide spans 1–18 (MAFLTALFLFLFFSFSSS). N-linked (GlcNAc...) asparagine glycosylation is present at Asn47. 28 LRR repeats span residues 64-87 (LGRV…EISS), 90-112 (NLRE…IWNL), 114-137 (HLQT…SELP), 138-160 (QLLY…FFIS), 163-185 (ALSS…IGKL), 187-209 (NLSN…IGNI), 235-257 (HLAK…FGEL), 259-281 (NLSI…LGNC), 283-304 (SLKS…ELSE), 330-352 (VLDS…IEDC), 354-376 (MLKH…LCGS), 378-400 (SLEA…FDGC), 402-425 (SLGE…WKLP), 426-447 (LMAL…LWKS), 449-471 (NLME…IGNA), 473-496 (SLKR…GKLT), 497-520 (SLSV…GDCT), 521-543 (SLTT…ITAL), 545-567 (QLQC…PSAY), 581-603 (HHGI…LGEC), 605-628 (VLVE…SRLT), 629-651 (NLTI…MGNS), 653-675 (KLQG…FGLL), 677-697 (SLVK…ASLG), 701-723 (ELTH…LSTM), 725-748 (KLVG…GNLT), 749-772 (QLEY…CGLP), and 773-795 (NLEF…GVCQ). 3 N-linked (GlcNAc...) asparagine glycosylation sites follow: Asn171, Asn187, and Asn208. N-linked (GlcNAc...) asparagine glycosylation is present at Asn259. N-linked (GlcNAc...) asparagine glycans are attached at residues Asn414 and Asn435. N-linked (GlcNAc...) asparagine glycosylation occurs at Asn555. A glycan (N-linked (GlcNAc...) asparagine) is linked at Asn629. Asn682, Asn711, and Asn746 each carry an N-linked (GlcNAc...) asparagine glycan. A helical membrane pass occupies residues 828–848 (WGIAGLMLGFTIIVFVFVFSL). A Phosphothreonine modification is found at Thr914. The region spanning 917 to 1192 (FSKKNIIGDG…LDVLKALKEI (276 aa)) is the Protein kinase domain. Residues 923-931 (IGDGGFGTV) and Lys945 contribute to the ATP site. Tyr990 carries the post-translational modification Phosphotyrosine. Catalysis depends on Asp1043, which acts as the Proton acceptor. A Phosphotyrosine modification is found at Tyr1085.

Belongs to the protein kinase superfamily. Ser/Thr protein kinase family. As to quaternary structure, interacts with TPD1. Autophosphorylates in vitro. Present in young buds, open flowers and siliques but absent from mature leaves and roots. Strongly expressed in the young organ primordia, and as the anthers and ovules developed, became focused in the microsporangia and in the distal and chalazal regions of the ovule. In cv. Landsberg erecta, only expressed in the anthers of young floral buds.

The protein localises to the cell membrane. It catalyses the reaction L-seryl-[protein] + ATP = O-phospho-L-seryl-[protein] + ADP + H(+). The enzyme catalyses L-threonyl-[protein] + ATP = O-phospho-L-threonyl-[protein] + ADP + H(+). In terms of biological role, receptor with a serine/threonine-protein kinase activity required for the specification of the correct number of male archesporial initials and for the subsequent specification of tapetal and middle cell layer identities. In seeds, required for enhancing cell size and the rate of embryonic development. This is Leucine-rich repeat receptor protein kinase EMS1 from Arabidopsis thaliana (Mouse-ear cress).